The chain runs to 509 residues: Cardiolipin synthase 1 (509 aa).

The next 3 helical transmembrane spans lie at 4–24, 30–50, and 59–79; these read PIIQ…LLNT, YTFV…VIFI, and LAWF…YSIF. 2 consecutive PLD phosphodiesterase domains span residues 238–265 and 422–449; these read VNYR…GDEY and KDGF…DVRS. Catalysis depends on residues His-243, Lys-245, Asp-250, His-427, Lys-429, and Asp-434.

It belongs to the phospholipase D family. Cardiolipin synthase subfamily.

Its subcellular location is the cell membrane. The enzyme catalyses 2 a 1,2-diacyl-sn-glycero-3-phospho-(1'-sn-glycerol) = a cardiolipin + glycerol. Catalyzes the reversible phosphatidyl group transfer from one phosphatidylglycerol molecule to another to form cardiolipin (CL) (diphosphatidylglycerol) and glycerol. This is Cardiolipin synthase 1 (cls1) from Bacillus anthracis.